A 388-amino-acid chain; its full sequence is Lysocardiolipin acyltransferase 1 (388 aa).

2 helical membrane passes run 9 to 29 (FLLF…GPLL) and 46 to 66 (IVAT…GVKV). An HXXXXD motif motif is present at residues 85-90 (HRTRLD). Helical transmembrane passes span 321–341 (IILV…CASL) and 342–362 (CLCP…LCQQ).

This sequence belongs to the 1-acyl-sn-glycerol-3-phosphate acyltransferase family.

The protein localises to the endoplasmic reticulum membrane. It catalyses the reaction a 1-acyl-sn-glycero-3-phosphate + an acyl-CoA = a 1,2-diacyl-sn-glycero-3-phosphate + CoA. The catalysed reaction is a 1-acyl-sn-glycero-3-phospho-(1D-myo-inositol) + an acyl-CoA = a 1,2-diacyl-sn-glycero-3-phospho-(1D-myo-inositol) + CoA. The enzyme catalyses 1-acyl-sn-glycero-3-phospho-(1'-sn-glycerol) + an acyl-CoA = a 1,2-diacyl-sn-glycero-3-phospho-(1'-sn-glycerol) + CoA. It carries out the reaction 1-hexadecanoyl-sn-glycero-3-phosphate + (9Z)-octadecenoyl-CoA = 1-hexadecanoyl-2-(9Z-octadecenoyl)-sn-glycero-3-phosphate + CoA. It catalyses the reaction 1-(9Z-octadecenoyl)-sn-glycero-3-phosphate + (9Z)-octadecenoyl-CoA = 1,2-di-(9Z-octadecenoyl)-sn-glycero-3-phosphate + CoA. The catalysed reaction is 1-(9Z,12Z)-octadecadienoyl-sn-glycero-3-phosphate + (9Z)-octadecenoyl-CoA = 1-(9Z,12Z)-octadecadienoyl-2-(9Z)-octadecenoyl-sn-glycero-3-phosphate + CoA. The enzyme catalyses 1-(9Z,12Z,15Z)-octadecatrienoyl-sn-glycero-3-phosphate + (9Z)-octadecenoyl-CoA = 1-(9Z,12Z,15Z)-octadecatrienoyl-2-(9Z)-octadecenoyl-sn-glycero-3-phosphate + CoA. It carries out the reaction 1-(9Z-octadecenoyl)-sn-glycero-3-phosphate + hexadecanoyl-CoA = 1-(9Z)-octadecenoyl-2-hexadecanoyl-sn-glycero-3-phosphate + CoA. It catalyses the reaction 1-(9Z-octadecenoyl)-sn-glycero-3-phosphate + octadecanoyl-CoA = 1-(9Z-octadecenoyl)-2-octadecanoyl-sn-glycero-3-phosphate + CoA. The catalysed reaction is 1-acyl-sn-glycero-3-phospho-(1'-sn-glycerol) + (9Z)-octadecenoyl-CoA = 1-acyl-2-(9Z-octadecenoyl)-sn-glycero-3-phospho-(1'-sn-glycerol) + CoA. The enzyme catalyses a 1-acyl-sn-glycero-3-phospho-(1D-myo-inositol) + (9Z)-octadecenoyl-CoA = a 1-acyl-2-(9Z-octadecenoyl)-sn-glycero-3-phospho-(1D-myo-inositol) + CoA. It carries out the reaction 1-hexadecanoyl-sn-glycero-3-phospho-(1D-myo-inositol) + hexadecanoyl-CoA = 1,2-dihexadecanoyl-sn-glycero-3-phospho-(1D-myo-inositol) + CoA. It catalyses the reaction 1-hexadecanoyl-sn-glycero-3-phospho-(1D-myo-inositol) + octadecanoyl-CoA = 1-hexadecanoyl-2-octadecanoyl-sn-glycero-3-phospho-(1D-myo-inositol) + CoA. The catalysed reaction is 1-hexadecanoyl-sn-glycero-3-phospho-(1D-myo-inositol) + (9Z)-octadecenoyl-CoA = 1-hexadecanoyl-2-(9Z-octadecenoyl)-sn-glycero-3-phospho-(1D-myo-inositol) + CoA. The enzyme catalyses 1-hexadecanoyl-sn-glycero-3-phospho-(1D-myo-inositol) + (9Z,12Z)-octadecadienoyl-CoA = 1-hexadecanoyl-2-(9Z,12Z-octadecadienoyl)-sn-glycero-3-phospho-(1D-myo-inositol) + CoA. It carries out the reaction 1-hexadecanoyl-sn-glycero-3-phospho-(1D-myo-inositol) + (5Z,8Z,11Z,14Z)-eicosatetraenoyl-CoA = 1-hexadecanoyl-2-(5Z,8Z,11Z,14Z-eicosatetraenoyl)-sn-glycero-3-phospho-D-myo-inositol + CoA. It catalyses the reaction 1-hexadecanoyl-sn-glycero-3-phospho-(1'-sn-glycerol) + hexadecanoyl-CoA = 1,2-dihexadecanoyl-sn-glycero-3-phospho-(1'-sn-glycerol) + CoA. The catalysed reaction is 1-hexadecanoyl-sn-glycero-3-phospho-(1'-sn-glycerol) + octadecanoyl-CoA = 1-hexadecanoyl-2-octadecanoyl-sn-glycero-3-phospho-(1'-sn-glycerol) + CoA. The enzyme catalyses 1-hexadecanoyl-sn-glycero-3-phospho-(1'-sn-glycerol) + (9Z)-octadecenoyl-CoA = 1-hexadecanoyl-2-(9Z-octadecenoyl)-sn-glycero-3-phospho-(1'-sn-glycerol) + CoA. It carries out the reaction 1-hexadecanoyl-sn-glycero-3-phospho-(1'-sn-glycerol) + (9Z,12Z)-octadecadienoyl-CoA = 1-hexadecanoyl-2-(9Z,12Z-octadecadienoyl)-sn-glycero-3-phospho-(1'-sn-glycerol) + CoA. It catalyses the reaction 1-tetradecanoyl-sn-glycero-3-phospho-(1'-sn-glycerol) + (9Z)-octadecenoyl-CoA = 1-tetradecanoyl-2-(9Z-octadecenoyl)-sn-glycero-3-phospho-(1'-sn-glycerol) + CoA. The catalysed reaction is 1-octadecanoyl-sn-glycero-3-phospho-(1'-sn-glycerol) + (9Z)-octadecenoyl-CoA = 1-octadecanoyl-2-(9Z-octadecenoyl)-sn-glycero-3-phospho-(1'-sn-glycerol) + CoA. The enzyme catalyses 1-(9Z-octadecenoyl)-sn-glycero-3-phospho-(1'-sn-glycerol) + (9Z)-octadecenoyl-CoA = 1,2-di-(9Z-octadecenoyl)-sn-glycero-3-phospho-(1'-sn-glycerol) + CoA. It carries out the reaction 1-hexadecanoyl-sn-glycero-3-phospho-(1D-myo-inositol) + dodecanoyl-CoA = 1-hexadecanoyl-2-dodecanoyl-sn-glycero-3-phospho-(1D-myo-inositol) + CoA. It catalyses the reaction 1',3'-bis-[1-acyl-sn-glycero-3-phospho]-glycerol + (9Z)-octadecenoyl-CoA = 1'-[1-acyl-2-(9Z)-octadecenoyl-sn-glycero-3-phospho],3'-[1-acyl,2-hydroxy-sn-glycero-3-phospho]-glycerol + CoA. The catalysed reaction is 1'-[1,2-diacyl-sn-glycero-3-phospho],3'-[1-acyl-sn-glycero-3-phospho]-glycerol + (9Z)-octadecenoyl-CoA = 1'-[1,2-diacyl-sn-glycero-3-phospho],3'-[1-acyl,2-(9Z)-octadecenoyl-sn-glycero-3-phospho]-glycerol + CoA. The enzyme catalyses 1'-[1,2-diacyl-sn-glycero-3-phospho],3'-[1-acyl-sn-glycero-3-phospho]-glycerol + (9Z,12Z)-octadecadienoyl-CoA = 1'-[1,2-diacyl-sn-glycero-3-phospho],3'-[1-acyl,2-(9Z,12Z)-octadecadienoyl-sn-glycero-3-phospho]-glycerol + CoA. It carries out the reaction 1'-[1,2-diacyl-sn-glycero-3-phospho],3'-[1-acyl-sn-glycero-3-phospho]-glycerol + dodecanoyl-CoA = 1'-[1,2-diacyl-sn-glycero-3-phospho],3'-[1-acyl,2-dodecanoyl-sn-glycero-3-phospho]-glycerol + CoA. It catalyses the reaction 1',3'-bis-[1-acyl-sn-glycero-3-phospho]-glycerol + dodecanoyl-CoA = 1'-[1-acyl-2-dodecanoyl-sn-glycero-3-phospho],3'-[1-acyl,2-hydroxy-sn-glycero-3-phospho]-glycerol + CoA. The catalysed reaction is a 1-acyl-sn-glycero-3-phosphate + (9Z)-octadecenoyl-CoA = a 1-acyl-2-(9Z-octadecenoyl)-sn-glycero-3-phosphate + CoA. The enzyme catalyses 1',3'-bis-[1-acyl-sn-glycero-3-phospho]-glycerol + (9Z,12Z)-octadecadienoyl-CoA = 1'-[1-acyl-2-(9Z,12Z)-octadecadienoyl-sn-glycero-3-phospho],3'-[1-acyl,2-hydroxy-sn-glycero-3-phospho]-glycerol + CoA. It carries out the reaction 1',3'-bis-[1-acyl-sn-glycero-3-phospho]-glycerol + hexadecanoyl-CoA = 1'-[1-acyl-2-hexadecanoyl-sn-glycero-3-phospho],3'-[1-acyl,2-hydroxy-sn-glycero-3-phospho]-glycerol + CoA. It catalyses the reaction 1',3'-bis-[1-acyl-sn-glycero-3-phospho]-glycerol + octadecanoyl-CoA = 1'-[1-acyl-2-octadecanoyl-sn-glycero-3-phospho],3'-[1-acyl,2-hydroxy-sn-glycero-3-phospho]-glycerol + CoA. The catalysed reaction is 1'-[1,2-diacyl-sn-glycero-3-phospho],3'-[1-acyl-sn-glycero-3-phospho]-glycerol + octanoyl-CoA = 1'-[1,2-diacyl-sn-glycero-3-phospho],3'-[1-acyl,2-octanoyl-sn-glycero-3-phospho]-glycerol + CoA. The enzyme catalyses 1',3'-bis-[1-acyl-sn-glycero-3-phospho]-glycerol + octanoyl-CoA = 1'-[1-acyl-2-octanoyl-sn-glycero-3-phospho],3'-[1-acyl,2-hydroxy-sn-glycero-3-phospho]-glycerol + CoA. It carries out the reaction 1'-[1,2-diacyl-sn-glycero-3-phospho],3'-[1-acyl-sn-glycero-3-phospho]-glycerol + hexadecanoyl-CoA = 1'-[1,2-diacyl-sn-glycero-3-phospho],3'-[1-acyl,2-hexadecanoyl-sn-glycero-3-phospho]-glycerol + CoA. It catalyses the reaction 1'-[1,2-diacyl-sn-glycero-3-phospho],3'-[1-acyl-sn-glycero-3-phospho]-glycerol + (5Z,8Z,11Z,14Z)-eicosatetraenoyl-CoA = 1'-[1,2-diacyl-sn-glycero-3-phospho],3'-[1-acyl,2-(5Z,8Z,11Z,14Z)-eicosatetraenoyl-sn-glycero-3-phospho]-glycerol + CoA. The catalysed reaction is 1',3'-bis-[1-acyl-sn-glycero-3-phospho]-glycerol + (5Z,8Z,11Z,14Z)-eicosatetraenoyl-CoA = 1'-[1-acyl-2-(5Z,8Z,11Z,14Z)-eicosatetraenoyl-sn-glycero-3-phospho],3'-[1-acyl,2-hydroxy-sn-glycero-3-phospho]-glycerol + CoA. The enzyme catalyses a 1-acyl-sn-glycero-3-phospho-(1D-myo-inositol) + octadecanoyl-CoA = a 1-acyl-2-octadecanoyl-sn-glycero-3-phospho-(1D-myo-inositol) + CoA. It carries out the reaction a 2-acyl-sn-glycero-3-phospho-D-myo-inositol + octadecanoyl-CoA = 1-octadecanoyl-2-acyl-sn-glycero-3-phospho-1D-myo-inositol + CoA. It functions in the pathway phospholipid metabolism; CDP-diacylglycerol biosynthesis; CDP-diacylglycerol from sn-glycerol 3-phosphate: step 2/3. Its function is as follows. Exhibits acyl-CoA:lysocardiolipin acyltransferase (ALCAT) activity; catalyzes the reacylation of lyso-cardiolipin to cardiolipin (CL), a key step in CL remodeling. Recognizes both monolysocardiolipin and dilysocardiolipin as substrates with a preference for linoleoyl-CoA and oleoyl-CoA as acyl donors. Also exhibits 1-acyl-sn-glycerol-3-phosphate acyltransferase activity (AGPAT) activity; converts 1-acyl-sn-glycerol-3- phosphate (lysophosphatidic acid or LPA) into 1,2-diacyl-sn-glycerol-3- phosphate (phosphatidic acid or PA) by incorporating an acyl moiety at the sn-2 position of the glycerol backbone. Possesses both lysophosphatidylinositol acyltransferase (LPIAT) and lysophosphatidylglycerol acyltransferase (LPGAT) activities. Required for establishment of the hematopoietic and endothelial lineages. This Danio rerio (Zebrafish) protein is Lysocardiolipin acyltransferase 1 (lclat1).